The chain runs to 108 residues: Thioredoxin Asp f 28 (108 aa).

Residues 1–108 (MSHGKVIAVD…LEEMIKSISA (108 aa)) form the Thioredoxin domain. Catalysis depends on nucleophile residues Cys33 and Cys36. Cys33 and Cys36 are oxidised to a cystine.

It belongs to the thioredoxin family.

Functionally, participates in various redox reactions through the reversible oxidation of its active center dithiol to a disulfide and catalyzes dithiol-disulfide exchange reactions. This chain is Thioredoxin Asp f 28, found in Aspergillus fumigatus (Neosartorya fumigata).